The sequence spans 342 residues: Biotin synthase (342 aa).

The Radical SAM core domain maps to N63–R290. Residues C78, C82, and C85 each contribute to the [4Fe-4S] cluster site. [2Fe-2S] cluster contacts are provided by C122, C153, C213, and R285.

This sequence belongs to the radical SAM superfamily. Biotin synthase family. As to quaternary structure, homodimer. [4Fe-4S] cluster is required as a cofactor. It depends on [2Fe-2S] cluster as a cofactor.

The catalysed reaction is (4R,5S)-dethiobiotin + (sulfur carrier)-SH + 2 reduced [2Fe-2S]-[ferredoxin] + 2 S-adenosyl-L-methionine = (sulfur carrier)-H + biotin + 2 5'-deoxyadenosine + 2 L-methionine + 2 oxidized [2Fe-2S]-[ferredoxin]. It participates in cofactor biosynthesis; biotin biosynthesis; biotin from 7,8-diaminononanoate: step 2/2. Catalyzes the conversion of dethiobiotin (DTB) to biotin by the insertion of a sulfur atom into dethiobiotin via a radical-based mechanism. In Cupriavidus pinatubonensis (strain JMP 134 / LMG 1197) (Cupriavidus necator (strain JMP 134)), this protein is Biotin synthase.